A 358-amino-acid polypeptide reads, in one-letter code: MNRILIIAGGTGGHIFPALAVARELREQEVDVQWLGVKGGLEEKLVPDSFPLHLIQIKAFRGKRGLQQLLMPLRLVRAVFQAYRIIRQFKPDVILGMGGYVAGPGGLAAWITRTPLIIHEQNSIPGLTNRVLAKMAKFILQGFPDTFPQNRKVITTGNPVRTELVKMPLPQVRLAARRGPLRILVLGGSQGARSINQKMLAALSSYPRSEEIAVWHQTGQRDFEFIQKEYEKIKIEAKVDNFISDMAGAYGWADLVVCRAGALTVCEIASVGVASIFIPYPHAVDNHQFHNARFLEQAGAAIIISEESLAETDLMRWFEQFAQDRDRLLTMAENARKLAKPEAVQRVIAQCKKFYAAR.

Residues 11-13, asparagine 122, arginine 161, serine 189, isoleucine 243, 262-267, and glutamine 288 contribute to the UDP-N-acetyl-alpha-D-glucosamine site; these read TGG and ALTVCE.

The protein belongs to the glycosyltransferase 28 family. MurG subfamily.

It localises to the cell inner membrane. It catalyses the reaction di-trans,octa-cis-undecaprenyl diphospho-N-acetyl-alpha-D-muramoyl-L-alanyl-D-glutamyl-meso-2,6-diaminopimeloyl-D-alanyl-D-alanine + UDP-N-acetyl-alpha-D-glucosamine = di-trans,octa-cis-undecaprenyl diphospho-[N-acetyl-alpha-D-glucosaminyl-(1-&gt;4)]-N-acetyl-alpha-D-muramoyl-L-alanyl-D-glutamyl-meso-2,6-diaminopimeloyl-D-alanyl-D-alanine + UDP + H(+). It functions in the pathway cell wall biogenesis; peptidoglycan biosynthesis. Functionally, cell wall formation. Catalyzes the transfer of a GlcNAc subunit on undecaprenyl-pyrophosphoryl-MurNAc-pentapeptide (lipid intermediate I) to form undecaprenyl-pyrophosphoryl-MurNAc-(pentapeptide)GlcNAc (lipid intermediate II). This is UDP-N-acetylglucosamine--N-acetylmuramyl-(pentapeptide) pyrophosphoryl-undecaprenol N-acetylglucosamine transferase from Coxiella burnetii (strain Dugway 5J108-111).